Here is a 1113-residue protein sequence, read N- to C-terminus: Histone deacetylase 5 (1113 aa).

The interval 1 to 22 (MNSPNESDGMSGREPSLGILPR) is disordered. Residue Lys-35 forms a Glycyl lysine isopeptide (Lys-Gly) (interchain with G-Cter in SUMO2) linkage. Disordered stretches follow at residues 39–63 (PGAMPSSMGGGGGGSPSPVELRGAL) and 187–272 (KEPT…SSPL). The span at 238-249 (DSRDDFPLRKTA) shows a compositional bias: basic and acidic residues. Ser-250 is subject to Phosphoserine; by AMPK, CaMK1, SIK1 and PKD/PRKD1. Residues 263-272 (KVAERRSSPL) are compositionally biased toward basic and acidic residues. Thr-283 is subject to Phosphothreonine; by PKC. The segment at 472 to 494 (RTVGKLPRHRPLSRTQSSPLPQS) is disordered. The segment covering 484-494 (SRTQSSPLPQS) has biased composition (low complexity). A Phosphoserine; by AMPK, CaMK1, SIK1 and PKD/PRKD1 modification is found at Ser-488. Lys-523 is modified (N6-acetyllysine). The tract at residues 526-611 (TKTGELSRQP…PDEGPDLEES (86 aa)) is disordered. Residues 571-610 (STQEDLEEEEEEEEEEEEDCIQVKDEDGESGPDEGPDLEE) show a composition bias toward acidic residues. A phosphoserine mark is found at Ser-600 and Ser-650. The segment at 675-1019 (GVVYDTFMLK…VSALLSVELQ (345 aa)) is histone deacetylase. Zn(2+) contacts are provided by Cys-687, Cys-689, His-695, and Cys-772. His-824 is a catalytic residue. Positions 1072–1113 (EEAETVSAMALLSVGAEQAQAVATQEHSPRPAEEPMEQEPAL) match the Nuclear export signal motif. The interval 1088–1113 (EQAQAVATQEHSPRPAEEPMEQEPAL) is disordered. The residue at position 1099 (Ser-1099) is a Phosphoserine.

Belongs to the histone deacetylase family. HD type 2 subfamily. As to quaternary structure, interacts with AHRR, BAHD1, BCOR, HDAC7, HDAC9, CTBP1, MEF2C, NCOR2, NRIP1, PHB2 and a 14-3-3 chaperone protein. Interacts with BCL6, DDIT3/CHOP, GRK5, KDM5B and MYOCD. Interacts with EP300 in the presence of TFAP2C. Interacts with ANKRA2. Interacts with CUL7 (as part of the 3M complex); negatively regulated by ANKRA2. Interacts with ZBTB7B; the interaction allows the recruitment of HDAC4 on CD8 loci for deacetylation and possible inhibition of CD8 genes expression. Interacts with RARA. In terms of processing, phosphorylated by AMPK, CaMK1, SIK1 and PRKD1 at Ser-250 and Ser-488. The phosphorylation is required for the export to the cytoplasm and inhibition. Phosphorylated by the PKC kinases PKN1 and PKN2, impairing nuclear import. Phosphorylated by GRK5, leading to nuclear export of HDAC5 and allowing MEF2-mediated transcription. Post-translationally, ubiquitinated. Polyubiquitination however does not lead to its degradation.

It is found in the nucleus. The protein resides in the cytoplasm. The enzyme catalyses N(6)-acetyl-L-lysyl-[histone] + H2O = L-lysyl-[histone] + acetate. Responsible for the deacetylation of lysine residues on the N-terminal part of the core histones (H2A, H2B, H3 and H4). Histone deacetylation gives a tag for epigenetic repression and plays an important role in transcriptional regulation, cell cycle progression and developmental events. Histone deacetylases act via the formation of large multiprotein complexes. Involved in muscle maturation by repressing transcription of myocyte enhancer MEF2C. During muscle differentiation, it shuttles into the cytoplasm, allowing the expression of myocyte enhancer factors. Serves as a corepressor of RARA and causes its deacetylation. In association with RARA, plays a role in the repression of microRNA-10a and thereby in the inflammatory response. This is Histone deacetylase 5 (Hdac5) from Mus musculus (Mouse).